The following is a 122-amino-acid chain: Large ribosomal subunit protein eL34 (122 aa).

The protein belongs to the eukaryotic ribosomal protein eL34 family. In terms of assembly, component of the large ribosomal subunit. Mature ribosomes consist of a small (40S) and a large (60S) subunit. The 40S subunit contains about 32 different proteins and 1 molecule of RNA (18S). The 60S subunit contains 45 different proteins and 3 molecules of RNA (25S, 5.8S and 5S).

Its subcellular location is the cytoplasm. In terms of biological role, component of the ribosome, a large ribonucleoprotein complex responsible for the synthesis of proteins in the cell. The small ribosomal subunit (SSU) binds messenger RNAs (mRNAs) and translates the encoded message by selecting cognate aminoacyl-transfer RNA (tRNA) molecules. The large subunit (LSU) contains the ribosomal catalytic site termed the peptidyl transferase center (PTC), which catalyzes the formation of peptide bonds, thereby polymerizing the amino acids delivered by tRNAs into a polypeptide chain. The nascent polypeptides leave the ribosome through a tunnel in the LSU and interact with protein factors that function in enzymatic processing, targeting, and the membrane insertion of nascent chains at the exit of the ribosomal tunnel. The protein is Large ribosomal subunit protein eL34 of Candida albicans (strain SC5314 / ATCC MYA-2876) (Yeast).